The sequence spans 127 residues: Cuticle protein 4 (127 aa).

Residue Gln1 is modified to Pyrrolidone carboxylic acid. 2 tandem repeats follow at residues 31–39 (PADTKKAEI) and 84–92 (PADTKKAEI).

The protein is Cuticle protein 4 of Blaberus craniifer (Death's head cockroach).